We begin with the raw amino-acid sequence, 349 residues long: GTP 3',8-cyclase (349 aa).

One can recognise a Radical SAM core domain in the interval 24 to 249; sequence PFGRAITYLR…VDSDYQTGGP (226 aa). Residue Arg-33 participates in GTP binding. [4Fe-4S] cluster contacts are provided by Cys-40 and Cys-44. Residue Tyr-46 coordinates S-adenosyl-L-methionine. Residue Cys-47 coordinates [4Fe-4S] cluster. Position 82 (Arg-82) interacts with GTP. Residue Gly-86 coordinates S-adenosyl-L-methionine. Thr-116 is a GTP binding site. Ser-140 lines the S-adenosyl-L-methionine pocket. Lys-176 provides a ligand contact to GTP. Met-210 provides a ligand contact to S-adenosyl-L-methionine. [4Fe-4S] cluster contacts are provided by Cys-273 and Cys-276. Residue 278–280 coordinates GTP; that stretch reads RVR. Residue Cys-290 coordinates [4Fe-4S] cluster.

The protein belongs to the radical SAM superfamily. MoaA family. Monomer and homodimer. It depends on [4Fe-4S] cluster as a cofactor.

The enzyme catalyses GTP + AH2 + S-adenosyl-L-methionine = (8S)-3',8-cyclo-7,8-dihydroguanosine 5'-triphosphate + 5'-deoxyadenosine + L-methionine + A + H(+). It functions in the pathway cofactor biosynthesis; molybdopterin biosynthesis. In terms of biological role, catalyzes the cyclization of GTP to (8S)-3',8-cyclo-7,8-dihydroguanosine 5'-triphosphate. The polypeptide is GTP 3',8-cyclase (Agrobacterium fabrum (strain C58 / ATCC 33970) (Agrobacterium tumefaciens (strain C58))).